Consider the following 221-residue polypeptide: DELTA-actitoxin-Ucs1a (221 aa).

The N-terminal stretch at Met-1–Ala-19 is a signal peptide. Positions Leu-20–Lys-42 are excised as a propeptide. The interval Ala-45–Ala-54 is plays an important role in the hemolytic activity. An N-terminal region region spans residues Gly-53–Asn-72. Phosphocholine-binding residues include Ser-96, Val-129, Ser-147, Pro-149, Tyr-175, Tyr-179, and Tyr-180. Residues Ser-147–Lys-162 form a trp-rich region, which is important for the binding to lipid membrane region. The Cell attachment site, crucial for protein stability motif lies at Lys-186–Asp-188.

Belongs to the actinoporin family. Sea anemone subfamily. In terms of assembly, octamer or nonamer in membranes. Monomer in the soluble state.

Its subcellular location is the secreted. The protein localises to the nematocyst. It localises to the target cell membrane. Its function is as follows. Pore-forming protein that forms cations-selective hydrophilic pores of around 1 nm and causes cytolysis. Pore formation is a multi-step process that involves specific recognition of membrane sphingomyelin (but neither cholesterol nor phosphatidylcholine) using aromatic rich region and adjacent phosphocholine (POC) binding site, firm binding to the membrane (mainly driven by hydrophobic interactions) accompanied by the transfer of the N-terminal region to the lipid-water interface and finally pore formation after oligomerization of monomers. The chain is DELTA-actitoxin-Ucs1a from Urticina crassicornis (Mottled anemone).